The sequence spans 998 residues: Bifunctional glutamine synthetase adenylyltransferase/adenylyl-removing enzyme (998 aa).

The interval 1–487 (MVVTKPATQR…LHAKLFYQPL (487 aa)) is adenylyl removase. The adenylyl transferase stretch occupies residues 492–998 (GPAGLEIRHG…KAVVRKVFGS (507 aa)).

The protein belongs to the GlnE family. The cofactor is Mg(2+).

It carries out the reaction [glutamine synthetase]-O(4)-(5'-adenylyl)-L-tyrosine + phosphate = [glutamine synthetase]-L-tyrosine + ADP. It catalyses the reaction [glutamine synthetase]-L-tyrosine + ATP = [glutamine synthetase]-O(4)-(5'-adenylyl)-L-tyrosine + diphosphate. In terms of biological role, involved in the regulation of glutamine synthetase GlnA, a key enzyme in the process to assimilate ammonia. When cellular nitrogen levels are high, the C-terminal adenylyl transferase (AT) inactivates GlnA by covalent transfer of an adenylyl group from ATP to specific tyrosine residue of GlnA, thus reducing its activity. Conversely, when nitrogen levels are low, the N-terminal adenylyl removase (AR) activates GlnA by removing the adenylyl group by phosphorolysis, increasing its activity. The regulatory region of GlnE binds the signal transduction protein PII (GlnB) which indicates the nitrogen status of the cell. The chain is Bifunctional glutamine synthetase adenylyltransferase/adenylyl-removing enzyme from Mycobacterium avium (strain 104).